Here is a 235-residue protein sequence, read N- to C-terminus: Putative quercetin 2,3-dioxygenase ZMO1337 (235 aa).

Residues His-57, His-59, His-101, and Glu-103 each coordinate a divalent metal cation.

The protein belongs to the pirin family. A divalent metal cation is required as a cofactor.

It carries out the reaction quercetin + O2 = 2-(3,4-dihydroxybenzoyloxy)-4,6-dihydroxybenzoate + CO. The protein operates within flavonoid metabolism; quercetin degradation. Functionally, putative quercetin 2,3-dioxygenase. In Zymomonas mobilis subsp. mobilis (strain ATCC 31821 / ZM4 / CP4), this protein is Putative quercetin 2,3-dioxygenase ZMO1337.